The sequence spans 210 residues: Imidazoleglycerol-phosphate dehydratase (210 aa).

The protein belongs to the imidazoleglycerol-phosphate dehydratase family.

It is found in the cytoplasm. It catalyses the reaction D-erythro-1-(imidazol-4-yl)glycerol 3-phosphate = 3-(imidazol-4-yl)-2-oxopropyl phosphate + H2O. Its pathway is amino-acid biosynthesis; L-histidine biosynthesis; L-histidine from 5-phospho-alpha-D-ribose 1-diphosphate: step 6/9. The sequence is that of Imidazoleglycerol-phosphate dehydratase from Mycobacterium leprae (strain Br4923).